Reading from the N-terminus, the 349-residue chain is Putative nuclease HARBI1 (349 aa).

The DDE Tnp4 domain maps to 148–300 (VDCIHVAIKA…IILACCVLHN (153 aa)). The a divalent metal cation site is built by aspartate 149, aspartate 199, aspartate 225, and glutamate 261.

Belongs to the HARBI1 family. In terms of assembly, interacts with NAIF1. The cofactor is a divalent metal cation.

The protein resides in the nucleus. It is found in the cytoplasm. Its function is as follows. Transposase-derived protein that may have nuclease activity (Potential). Does not have transposase activity. This is Putative nuclease HARBI1 (Harbi1) from Rattus norvegicus (Rat).